Here is a 94-residue protein sequence, read N- to C-terminus: Nucleoid-associated protein MYPE8070 (94 aa).

This sequence belongs to the YbaB/EbfC family. Homodimer.

The protein localises to the cytoplasm. It localises to the nucleoid. Binds to DNA and alters its conformation. May be involved in regulation of gene expression, nucleoid organization and DNA protection. In Malacoplasma penetrans (strain HF-2) (Mycoplasma penetrans), this protein is Nucleoid-associated protein MYPE8070.